The primary structure comprises 115 residues: Large ribosomal subunit protein bL19 (115 aa).

The protein belongs to the bacterial ribosomal protein bL19 family.

In terms of biological role, this protein is located at the 30S-50S ribosomal subunit interface and may play a role in the structure and function of the aminoacyl-tRNA binding site. The polypeptide is Large ribosomal subunit protein bL19 (Koribacter versatilis (strain Ellin345)).